The following is a 597-amino-acid chain: MESNDDRNLEAINASVGRLVWVRRRNGSWWPGQTLVHDQVPDNSLVGPKVGTPIKLLGRDDVSVDWYILENSKTVKAFRCGEYDTCIEKAKASSSKKRSGKCTLREDAINNALKIENEHLAKEDDNLCNLSGEEDSKRCLSGKEDEDSGSSDAEETEDDELASAPEQLQSSISSQEMNNVGASKVQSKRRRTPNDSEDDGTEGVKRMRGLEDIGKEQAGGIVEHKQDLDLICAVGLSDSVSNGNTIANGNKVCSPSSLKRNVSECSKRKNRRRQLTKVLESTAMVSVPVTCDQGVSLDCQGIYDSKVSGMESVESMKSVSVVINNNSDSTGVSCEDAYENVVGASHNNKAKDSEISSISVSAEDDSSDRLFDVPLTGEENHSEGFPAACRISSPRKALVTDLTRRCGRNSHNVFVKNEASNGSACTSPPASEPVNCILSGIEKNTSKWQLKGKRNSRQMSKKQEERRNVYGEEANNNSSTPHSTLYEVKIEVKASYTKPRVPLVSRMSELSGKAIVGHPLSVEILEEDYSNGMVMPPVVAKAKSLPKKNGKKQTTEKAKETVVACIPLKVVFSRINEVLKGSARQTQHRALPSAAKT.

The PWWP domain occupies 16 to 78 (VGRLVWVRRR…LENSKTVKAF (63 aa)). Disordered regions lie at residues 126–210 (NLCN…MRGL) and 449–482 (QLKGKRNSRQMSKKQEERRNVYGEEANNNSSTPH). Positions 134-143 (EDSKRCLSGK) are enriched in basic and acidic residues. Residues 144–161 (EDEDSGSSDAEETEDDEL) show a composition bias toward acidic residues. Residues 166–185 (EQLQSSISSQEMNNVGASKV) show a composition bias toward polar residues. Over residues 450-460 (LKGKRNSRQMS) the composition is skewed to basic residues. Residues 461-470 (KKQEERRNVY) show a composition bias toward basic and acidic residues.

This is an uncharacterized protein from Arabidopsis thaliana (Mouse-ear cress).